A 335-amino-acid chain; its full sequence is MKDILNALYHQKDLNDGEVKKLFTLIIHEKVSPVQLGAILCALKIKGESFKEISVAATTLLEHAPKPFNSGLDLIDNCGTGGDGLKTINISTIAALIASSMGLPMAKHGSRSVSSHSGSADLLENLGVNIEMNPMQLENCFKQTHFGFLFAPLYHQSFKKSAPLRKELFTKTIFNCLGPLINPLRPKIQLLGVYDKSLCKTMALALKALGVKRAMVVNGGGTDEIVLHDITHACELKNNKILEYDLSAKDFDLPPYDLKELQIENAKESVQACLDILENKGKDSHTMVVVANVASLLYLSHKAKDLKEGVNMTLEHLKTKAPYVHLQKIIRLSHA.

5-phospho-alpha-D-ribose 1-diphosphate is bound by residues Gly-79, 82–83 (GD), Thr-87, 89–92 (NIST), 107–115 (KHGSRSVSS), and Ser-119. Gly-79 is a binding site for anthranilate. Residue Ser-91 coordinates Mg(2+). Residue Arg-165 coordinates anthranilate. 2 residues coordinate Mg(2+): Asp-223 and Glu-224.

Belongs to the anthranilate phosphoribosyltransferase family. As to quaternary structure, homodimer. Mg(2+) serves as cofactor.

It catalyses the reaction N-(5-phospho-beta-D-ribosyl)anthranilate + diphosphate = 5-phospho-alpha-D-ribose 1-diphosphate + anthranilate. Its pathway is amino-acid biosynthesis; L-tryptophan biosynthesis; L-tryptophan from chorismate: step 2/5. Its function is as follows. Catalyzes the transfer of the phosphoribosyl group of 5-phosphorylribose-1-pyrophosphate (PRPP) to anthranilate to yield N-(5'-phosphoribosyl)-anthranilate (PRA). The polypeptide is Anthranilate phosphoribosyltransferase (Helicobacter pylori (strain G27)).